Here is a 436-residue protein sequence, read N- to C-terminus: 3-ketoacyl-CoA thiolase (436 aa).

The active-site Acyl-thioester intermediate is C99. Catalysis depends on proton acceptor residues H392 and C422.

Belongs to the thiolase-like superfamily. Thiolase family. In terms of assembly, heterotetramer of two alpha chains (FadJ) and two beta chains (FadI).

It localises to the cytoplasm. It carries out the reaction an acyl-CoA + acetyl-CoA = a 3-oxoacyl-CoA + CoA. It functions in the pathway lipid metabolism; fatty acid beta-oxidation. In terms of biological role, catalyzes the final step of fatty acid oxidation in which acetyl-CoA is released and the CoA ester of a fatty acid two carbons shorter is formed. This chain is 3-ketoacyl-CoA thiolase, found in Shewanella sediminis (strain HAW-EB3).